The primary structure comprises 102 residues: Small ribosomal subunit protein bS20 (102 aa).

It belongs to the bacterial ribosomal protein bS20 family.

In terms of biological role, binds directly to 16S ribosomal RNA. The protein is Small ribosomal subunit protein bS20 of Synechococcus sp. (strain WH7803).